The chain runs to 299 residues: Proline iminopeptidase (299 aa).

One can recognise an AB hydrolase-1 domain in the interval proline 29–proline 279. Residue serine 105 is the Nucleophile of the active site. Aspartate 245 is a catalytic residue. The active-site Proton donor is the histidine 272.

This sequence belongs to the peptidase S33 family.

It localises to the cell envelope. The catalysed reaction is Release of N-terminal proline from a peptide.. Its function is as follows. Releases the N-terminal proline from various substrates. The sequence is that of Proline iminopeptidase from Levilactobacillus brevis (strain ATCC 367 / BCRC 12310 / CIP 105137 / JCM 1170 / LMG 11437 / NCIMB 947 / NCTC 947) (Lactobacillus brevis).